The sequence spans 350 residues: Small ribosomal subunit biogenesis GTPase RsgA (350 aa).

The segment covering 1–17 (MSKNKLSKGQQRRVNAN) has biased composition (polar residues). A disordered region spans residues 1 to 33 (MSKNKLSKGQQRRVNANHQRRLKTSKEKPDYDD). The 170-residue stretch at 104-273 (TSVLTRPDFY…VIDSPGVREF (170 aa)) folds into the CP-type G domain. GTP is bound by residues 160–163 (NKID) and 214–222 (GQSGVGKSS). Positions 297, 302, 304, and 310 each coordinate Zn(2+).

This sequence belongs to the TRAFAC class YlqF/YawG GTPase family. RsgA subfamily. In terms of assembly, monomer. Associates with 30S ribosomal subunit, binds 16S rRNA. Requires Zn(2+) as cofactor.

It localises to the cytoplasm. Functionally, one of several proteins that assist in the late maturation steps of the functional core of the 30S ribosomal subunit. Helps release RbfA from mature subunits. May play a role in the assembly of ribosomal proteins into the subunit. Circularly permuted GTPase that catalyzes slow GTP hydrolysis, GTPase activity is stimulated by the 30S ribosomal subunit. This chain is Small ribosomal subunit biogenesis GTPase RsgA, found in Escherichia coli (strain SMS-3-5 / SECEC).